The primary structure comprises 397 residues: Phosphoglycerate kinase (397 aa).

Substrate is bound by residues 21 to 23 (DFN), R37, 60 to 63 (HLGR), R120, and R153. Residues K206, G296, E327, and 353–356 (GGDS) contribute to the ATP site.

This sequence belongs to the phosphoglycerate kinase family. In terms of assembly, monomer.

The protein localises to the cytoplasm. The catalysed reaction is (2R)-3-phosphoglycerate + ATP = (2R)-3-phospho-glyceroyl phosphate + ADP. The protein operates within carbohydrate degradation; glycolysis; pyruvate from D-glyceraldehyde 3-phosphate: step 2/5. This chain is Phosphoglycerate kinase, found in Rhodopirellula baltica (strain DSM 10527 / NCIMB 13988 / SH1).